A 195-amino-acid chain; its full sequence is Large ribosomal subunit protein bL25 (195 aa).

Belongs to the bacterial ribosomal protein bL25 family. CTC subfamily. Part of the 50S ribosomal subunit; part of the 5S rRNA/L5/L18/L25 subcomplex. Contacts the 5S rRNA. Binds to the 5S rRNA independently of L5 and L18.

Functionally, this is one of the proteins that binds to the 5S RNA in the ribosome where it forms part of the central protuberance. The protein is Large ribosomal subunit protein bL25 of Geobacter metallireducens (strain ATCC 53774 / DSM 7210 / GS-15).